Reading from the N-terminus, the 379-residue chain is Cyclic di-GMP phosphodiesterase PdeB (379 aa).

Positions phenylalanine 114–aspartate 310 constitute an HD-GYP domain.

It depends on Mn(2+) as a cofactor.

The catalysed reaction is 3',3'-c-di-GMP + 2 H2O = 2 GMP + 2 H(+). Phosphodiesterase (PDE) that catalyzes the hydrolysis of cyclic diguanylate (c-di-GMP) to GMP. The protein is Cyclic di-GMP phosphodiesterase PdeB of Borreliella burgdorferi (strain ATCC 35210 / DSM 4680 / CIP 102532 / B31) (Borrelia burgdorferi).